The following is a 416-amino-acid chain: Glutamyl-tRNA reductase (416 aa).

Residues 49–52 (TCNR), S105, 110–112 (EPQ), and Q116 contribute to the substrate site. C50 acts as the Nucleophile in catalysis. 185–190 (GAGETI) lines the NADP(+) pocket.

Belongs to the glutamyl-tRNA reductase family. Homodimer.

The enzyme catalyses (S)-4-amino-5-oxopentanoate + tRNA(Glu) + NADP(+) = L-glutamyl-tRNA(Glu) + NADPH + H(+). It participates in porphyrin-containing compound metabolism; protoporphyrin-IX biosynthesis; 5-aminolevulinate from L-glutamyl-tRNA(Glu): step 1/2. In terms of biological role, catalyzes the NADPH-dependent reduction of glutamyl-tRNA(Glu) to glutamate 1-semialdehyde (GSA). The chain is Glutamyl-tRNA reductase from Shewanella frigidimarina (strain NCIMB 400).